Consider the following 505-residue polypeptide: 2,3-bisphosphoglycerate-independent phosphoglycerate mutase (505 aa).

Mn(2+)-binding residues include D15 and S65. Residue S65 is the Phosphoserine intermediate of the active site. Substrate is bound by residues H126, R156 to D157, R187, R193, R260 to R263, and K333. Residues D398, H402, D439, H440, and H457 each coordinate Mn(2+).

The protein belongs to the BPG-independent phosphoglycerate mutase family. Monomer. It depends on Mn(2+) as a cofactor.

It carries out the reaction (2R)-2-phosphoglycerate = (2R)-3-phosphoglycerate. It functions in the pathway carbohydrate degradation; glycolysis; pyruvate from D-glyceraldehyde 3-phosphate: step 3/5. In terms of biological role, catalyzes the interconversion of 2-phosphoglycerate and 3-phosphoglycerate. The sequence is that of 2,3-bisphosphoglycerate-independent phosphoglycerate mutase from Mycoplasmopsis pulmonis (strain UAB CTIP) (Mycoplasma pulmonis).